The primary structure comprises 561 residues: Arginine--tRNA ligase (561 aa).

The short motif at 108–118 (PNVAKEMHVGH) is the 'HIGH' region element.

This sequence belongs to the class-I aminoacyl-tRNA synthetase family. In terms of assembly, monomer.

It is found in the cytoplasm. It carries out the reaction tRNA(Arg) + L-arginine + ATP = L-arginyl-tRNA(Arg) + AMP + diphosphate. This is Arginine--tRNA ligase from Haemophilus ducreyi (strain 35000HP / ATCC 700724).